Consider the following 334-residue polypeptide: F-box only protein 16 (334 aa).

The region spanning 86 to 132 is the F-box domain; it reads LDFTTKLPRVLSVYIFSFLDPRSLCRCAQVSWYWKSLAELDQLWMLK. Disordered regions lie at residues 168–222 and 314–334; these read PKTP…WRSS and LEHL…QSQS. Low complexity predominate over residues 194-204; sequence SPSLAFRSSSS. Over residues 210 to 222 the composition is skewed to basic and acidic residues; that stretch reads NPGEKELPPWRSS. The segment covering 323–334 has biased composition (low complexity); it reads LQSPSPRLQSQS.

Part of a SCF (SKP1-cullin-F-box) protein ligase complex.

Probably recognizes and binds to some phosphorylated proteins and promotes their ubiquitination and degradation. In Mus musculus (Mouse), this protein is F-box only protein 16 (Fbxo16).